A 222-amino-acid chain; its full sequence is UPF0488 protein C8orf33 homolog (222 aa).

Residues methionine 1–serine 16 show a composition bias toward low complexity. 3 disordered regions span residues methionine 1–leucine 103, lysine 119–proline 146, and valine 186–proline 210. An N-acetylalanine modification is found at alanine 2. Over residues arginine 17–proline 28 the composition is skewed to basic residues. Arginine 27 bears the Omega-N-methylarginine mark. Residues serine 29–proline 39 are compositionally biased toward low complexity. Serine 75 is subject to Phosphoserine. The span at proline 93–leucine 103 shows a compositional bias: low complexity.

It belongs to the UPF0488 family.

This Mus musculus (Mouse) protein is UPF0488 protein C8orf33 homolog.